The following is a 138-amino-acid chain: Putative pre-16S rRNA nuclease (138 aa).

This sequence belongs to the YqgF nuclease family.

The protein resides in the cytoplasm. Its function is as follows. Could be a nuclease involved in processing of the 5'-end of pre-16S rRNA. The protein is Putative pre-16S rRNA nuclease of Haemophilus ducreyi (strain 35000HP / ATCC 700724).